Here is an 81-residue protein sequence, read N- to C-terminus: Photosystem I iron-sulfur center (81 aa).

4Fe-4S ferredoxin-type domains lie at Ser2–Trp31 and Ile39–Tyr68. [4Fe-4S] cluster-binding residues include Cys11, Cys14, Cys17, Cys21, Cys48, Cys51, Cys54, and Cys58.

In terms of assembly, the cyanobacterial PSI reaction center is composed of one copy each of PsaA,B,C,D,E,F,I,J,K,L,M and X, and forms trimeric complexes. Requires [4Fe-4S] cluster as cofactor.

It is found in the cellular thylakoid membrane. The enzyme catalyses reduced [plastocyanin] + hnu + oxidized [2Fe-2S]-[ferredoxin] = oxidized [plastocyanin] + reduced [2Fe-2S]-[ferredoxin]. In terms of biological role, apoprotein for the two 4Fe-4S centers FA and FB of photosystem I (PSI); essential for photochemical activity. FB is the terminal electron acceptor of PSI, donating electrons to ferredoxin. The C-terminus interacts with PsaA/B/D and helps assemble the protein into the PSI complex. Required for binding of PsaD and PsaE to PSI. PSI is a plastocyanin/cytochrome c6-ferredoxin oxidoreductase, converting photonic excitation into a charge separation, which transfers an electron from the donor P700 chlorophyll pair to the spectroscopically characterized acceptors A0, A1, FX, FA and FB in turn. Functionally, mutant proteins with a 3Fe-4S center are unable to reconstitute PSI activity in vivo. The sequence is that of Photosystem I iron-sulfur center from Synechocystis sp. (strain ATCC 27184 / PCC 6803 / Kazusa).